We begin with the raw amino-acid sequence, 425 residues long: 2,3-diketo-L-gulonate TRAP transporter large permease protein YiaN (425 aa).

The next 11 helical transmembrane spans lie at Val3 to Ala23, Phe54 to Leu74, Leu93 to Ala113, Leu139 to Phe159, Leu170 to Trp190, Ile209 to Gly229, Phe235 to Ile255, Val277 to Leu297, Leu314 to Pro334, Ile355 to Gly375, and Tyr399 to Leu419.

This sequence belongs to the TRAP transporter large permease family. In terms of assembly, the complex comprises the extracytoplasmic solute receptor protein YiaO, and the two transmembrane proteins YiaM and YiaN.

Its subcellular location is the cell inner membrane. Its function is as follows. Part of the tripartite ATP-independent periplasmic (TRAP) transport system YiaMNO involved in the uptake of 2,3-diketo-L-gulonate. This Escherichia coli (strain K12) protein is 2,3-diketo-L-gulonate TRAP transporter large permease protein YiaN (yiaN).